The primary structure comprises 107 residues: uncharacterized protein (107 aa).

Residues 37–59 form a helical membrane-spanning segment; the sequence is MVFSFLTVMPGDFIKCLFLRFFV.

The protein localises to the membrane. This is an uncharacterized protein from Saccharomyces cerevisiae (strain ATCC 204508 / S288c) (Baker's yeast).